The sequence spans 612 residues: Peroxisomal targeting signal receptor (612 aa).

An N-acetylmethionine modification is found at Met-1. The interval Met-1–Lys-24 is disordered. Cys-6 participates in a covalent cross-link: Glycyl cysteine thioester (Cys-Gly) (interchain with G-Cter in ubiquitin). The amphipathic helix 1 (AH1) stretch occupies residues Ser-7–Asn-29. Residues Lys-18 and Lys-24 each participate in a glycyl lysine isopeptide (Lys-Gly) (interchain with G-Cter in ubiquitin) cross-link. Ser-61 is modified (phosphoserine). A TPR 1 repeat occupies Asn-64 to Ser-97. Residues Arg-70–Thr-104 form an amphipathic helix 2 (AH2) region. The WxxxF/Y motif 1 motif lies at Trp-120–Phe-124. The interval Ser-129–Ala-151 is disordered. Residues Pro-158–Ser-174 form an amphipathic helix 3 (AH3) region. The segment at Ala-182–Gln-202 is disordered. Residues Trp-204 to Phe-208 carry the WxxxF/Y motif 2 motif. The interval Phe-257–Pro-273 is amphipathic helix 4 (AH4). TPR repeat units lie at residues Pro-313–His-346, Val-347–Asn-380, Leu-381–Arg-418, Ile-419–Asp-456, Pro-457–Asp-490, Glu-491–Phe-524, and Val-525–Asn-558.

The protein belongs to the peroxisomal targeting signal receptor family. As to quaternary structure, interacts (via WxxxF/Y and LVxEF motifs) with PEX14; promoting translocation through the PEX13-PEX14 docking complex. In terms of processing, monoubiquitinated at Cys-6 by PEX2 during PEX5 passage through the retrotranslocation channel: monoubiquitination acts as a signal for PEX5 extraction and is required for proper export from peroxisomes and recycling. Ubiquitination at Cys-6 is UBC4-independent but requires the presence of PEX4. When PEX5 recycling is compromised, polyubiquitinated at Lys-18 and Lys-24 by PEX10 during its passage through the retrotranslocation channel, leading to its degradation. Ubiquitination at Lys-18 and Lys-24 are UBC4-dependent. Monoubiquitination at Cys-6 and polyubiquitination at Lys-18 and Lys-24 are removed by UBP15 in the cytosol, resetting PEX5 for a subsequent import cycle.

It is found in the cytoplasm. Its subcellular location is the cytosol. The protein localises to the peroxisome matrix. In terms of biological role, receptor that mediates peroxisomal import of proteins containing a C-terminal PTS1-type tripeptide peroxisomal targeting signal (SKL-type). Binds to cargo proteins containing a PTS1 peroxisomal targeting signal in the cytosol, and translocates them into the peroxisome matrix by passing through the PEX13-PEX14 docking complex along with cargo proteins. PEX5 receptor is then retrotranslocated into the cytosol, leading to release of bound cargo in the peroxisome matrix, and reset for a subsequent peroxisome import cycle. This Saccharomyces cerevisiae (strain ATCC 204508 / S288c) (Baker's yeast) protein is Peroxisomal targeting signal receptor.